Consider the following 213-residue polypeptide: Kynurenine formamidase (213 aa).

W20 is a substrate binding site. Zn(2+)-binding residues include H50, H54, and D56. H60 functions as the Proton donor/acceptor in the catalytic mechanism. Zn(2+) is bound by residues H161 and E173.

The protein belongs to the Cyclase 1 superfamily. KynB family. In terms of assembly, homodimer. Zn(2+) serves as cofactor.

The enzyme catalyses N-formyl-L-kynurenine + H2O = L-kynurenine + formate + H(+). The protein operates within amino-acid degradation; L-tryptophan degradation via kynurenine pathway; L-kynurenine from L-tryptophan: step 2/2. In terms of biological role, catalyzes the hydrolysis of N-formyl-L-kynurenine to L-kynurenine, the second step in the kynurenine pathway of tryptophan degradation. The polypeptide is Kynurenine formamidase (Pseudomonas aeruginosa (strain UCBPP-PA14)).